Reading from the N-terminus, the 331-residue chain is Mitochondrial glycine transporter (331 aa).

3 Solcar repeats span residues 19–103 (SRTT…LRQG), 132–216 (LSNW…LKRR), and 234–318 (SSSS…LILR). The next 6 helical transmembrane spans lie at 25 to 50 (FAAGLCSGLTSSILLQPADLLKTRVQ), 78 to 104 (GTLPSALRTGFGSALYFTSLNALRQGL), 138 to 163 (LATGAVARTAAGFVMMPVTVLKVRYE), 191 to 214 (GFGATAARDAPYAGLYVLFYEQLK), 238 to 264 (INFVSGGLAAGLATAITNPFDAVKTRL), and 293 to 311 (GLGLRITRKALSSALAWTV).

The protein belongs to the mitochondrial carrier (TC 2.A.29) family. SLC25A38 subfamily.

Its subcellular location is the mitochondrion inner membrane. The enzyme catalyses glycine(in) = glycine(out). Functionally, mitochondrial glycine transporter that imports glycine into the mitochondrial matrix. Plays an important role in providing glycine for the first enzymatic step in heme biosynthesis, the condensation of glycine with succinyl-CoA to produce 5-aminolevulinate (ALA) in the mitochondrial matrix. This chain is Mitochondrial glycine transporter, found in Neosartorya fischeri (strain ATCC 1020 / DSM 3700 / CBS 544.65 / FGSC A1164 / JCM 1740 / NRRL 181 / WB 181) (Aspergillus fischerianus).